The sequence spans 364 residues: Chorismate synthase (364 aa).

R47 provides a ligand contact to NADP(+). Residues 125–127, G288, 303–307, and R329 contribute to the FMN site; these read RAS and KPTAT.

Belongs to the chorismate synthase family. Homotetramer. The cofactor is FMNH2.

It catalyses the reaction 5-O-(1-carboxyvinyl)-3-phosphoshikimate = chorismate + phosphate. It functions in the pathway metabolic intermediate biosynthesis; chorismate biosynthesis; chorismate from D-erythrose 4-phosphate and phosphoenolpyruvate: step 7/7. Its function is as follows. Catalyzes the anti-1,4-elimination of the C-3 phosphate and the C-6 proR hydrogen from 5-enolpyruvylshikimate-3-phosphate (EPSP) to yield chorismate, which is the branch point compound that serves as the starting substrate for the three terminal pathways of aromatic amino acid biosynthesis. This reaction introduces a second double bond into the aromatic ring system. The polypeptide is Chorismate synthase (Synechococcus sp. (strain CC9605)).